The chain runs to 519 residues: Ion-translocating oxidoreductase complex subunit C (519 aa).

4Fe-4S ferredoxin-type domains lie at 372–401 (ETPEAKTMPCIRCGRCVQGCPVGLTPFELN) and 411–440 (GAAKVGLMDCLACGCCSYNCPANLPLVQSF). [4Fe-4S] cluster-binding residues include Cys381, Cys384, Cys387, Cys391, Cys420, Cys423, Cys426, and Cys430. Residues 494-519 (KAEEAAAAAAMPPPATATAIQGEATP) form a disordered region.

Belongs to the 4Fe4S bacterial-type ferredoxin family. RnfC subfamily. The complex is composed of six subunits: RnfA, RnfB, RnfC, RnfD, RnfE and RnfG. [4Fe-4S] cluster is required as a cofactor.

The protein resides in the cellular chromatophore membrane. In terms of biological role, part of a membrane-bound complex that couples electron transfer with translocation of ions across the membrane. Required for nitrogen fixation. Involved in electron transfer to nitrogenase. This is Ion-translocating oxidoreductase complex subunit C from Rhodobacter capsulatus (Rhodopseudomonas capsulata).